Here is a 218-residue protein sequence, read N- to C-terminus: Ras-related protein R-Ras (218 aa).

The tract at residues 1–30 (MSSGAASGTGRGRPRGGGPGPRDPPPGETH) is disordered. Gly residues predominate over residues 7-20 (SGTGRGRPRGGGPG). A GTP-binding site is contributed by 36–44 (GGGGVGKSA). The Effector region motif lies at 58–66 (YDPTIEDSY). GTP-binding positions include 83-87 (DTAGQ), 142-145 (NKAD), and 172-174 (SAK). Cys-215 carries the cysteine methyl ester modification. Cys-215 carries the S-geranylgeranyl cysteine lipid modification. A propeptide spans 216–218 (VLL) (removed in mature form).

This sequence belongs to the small GTPase superfamily. Ras family. In terms of assembly, interacts with PLCE1. Interacts (active GTP-bound form preferentially) with RGS14. Interacts with OSBPL3. Interacts with ZDHHC19. In terms of processing, S-palmitoylated by ZDHHC19, leading to increased association with membranes and with rafts/caveolae as well as enhanced cell viability.

It is found in the cell membrane. It catalyses the reaction GTP + H2O = GDP + phosphate + H(+). Functionally, GTP-binding protein with GTPase activity, likely involved in the regulation of MAPK signaling pathway and thereby controlling multiple cellular processes. Regulates the organization of the actin cytoskeleton. With OSPBL3, modulates integrin beta-1 (ITGB1) activity. The protein is Ras-related protein R-Ras (Rras) of Rattus norvegicus (Rat).